We begin with the raw amino-acid sequence, 511 residues long: Maturase K (511 aa).

It belongs to the intron maturase 2 family. MatK subfamily.

It localises to the plastid. The protein resides in the chloroplast. Usually encoded in the trnK tRNA gene intron. Probably assists in splicing its own and other chloroplast group II introns. This Bowiea volubilis (Climbing onion) protein is Maturase K.